We begin with the raw amino-acid sequence, 183 residues long: Neuronal synaptobrevin (183 aa).

Low complexity predominate over residues 1–17 (MADAAPAGDAPPNAGAP). The tract at residues 1–32 (MADAAPAGDAPPNAGAPAGEGGDGEIVGGPHN) is disordered. Topologically, residues 1 to 106 (MADAAPAGDA…KFWLQNLKMM (106 aa)) are cytoplasmic. The segment covering 18–27 (AGEGGDGEIV) has biased composition (gly residues). In terms of domain architecture, v-SNARE coiled-coil homology spans 41–101 (RLQQTQAQVD…GKLKRKFWLQ (61 aa)). Residues 107–127 (IIMGVIGLVVVGIIANKLGLI) traverse the membrane as a helical segment. Over 128–183 (GGEQPPQYQYPPQYMQPPPPPPQQPAGGQSSLVDAAGAGDGAGAGGSAGAGDHGGV) the chain is Vesicular. The segment at 135–183 (YQYPPQYMQPPPPPPQQPAGGQSSLVDAAGAGDGAGAGGSAGAGDHGGV) is disordered. The span at 141 to 151 (YMQPPPPPPQQ) shows a compositional bias: pro residues. Residues 165 to 183 (AGDGAGAGGSAGAGDHGGV) show a composition bias toward gly residues.

Belongs to the synaptobrevin family. Part of the SNARE core complex containing Snap25 and syntaxin. In terms of tissue distribution, specifically expressed in neurons and synapses.

The protein resides in the cytoplasmic vesicle. It is found in the secretory vesicle. Its subcellular location is the synaptic vesicle membrane. The protein localises to the early endosome membrane. Functionally, involved in the targeting and/or fusion of transport vesicles to their target membrane. Major SNARE protein of synaptic vesicles which mediates fusion of synaptic vesicles to release neurotransmitters. Essential for fast vesicular exocytosis and activity-dependent neurotransmitter release as well as fast endocytosis that mediates rapid reuse of synaptic vesicles. Also involved in a neuron-specific sort-and-degrade mechanism that promotes endolysosomal degradation and is required for neuronal maintenance. The protein is Neuronal synaptobrevin of Drosophila melanogaster (Fruit fly).